The sequence spans 1104 residues: Isoleucine--tRNA ligase (1104 aa).

A 'HIGH' region motif is present at residues 48-58 (PYTTGRIHLGT). The 'KMSKS' region signature appears at 644–648 (KMSKS). Lys647 lines the ATP pocket.

Belongs to the class-I aminoacyl-tRNA synthetase family. IleS type 2 subfamily. Monomer. The cofactor is Zn(2+).

The protein localises to the cytoplasm. The enzyme catalyses tRNA(Ile) + L-isoleucine + ATP = L-isoleucyl-tRNA(Ile) + AMP + diphosphate. Functionally, catalyzes the attachment of isoleucine to tRNA(Ile). As IleRS can inadvertently accommodate and process structurally similar amino acids such as valine, to avoid such errors it has two additional distinct tRNA(Ile)-dependent editing activities. One activity is designated as 'pretransfer' editing and involves the hydrolysis of activated Val-AMP. The other activity is designated 'posttransfer' editing and involves deacylation of mischarged Val-tRNA(Ile). The protein is Isoleucine--tRNA ligase of Methanocella arvoryzae (strain DSM 22066 / NBRC 105507 / MRE50).